The following is a 471-amino-acid chain: MTRVRVRGIYATALTQLLRNAGLDVVAASPPIRARFPDADLGAAEPHADIRMTPDRQGVGITAHGDDHARAVRAVVADLPRDTFVWPDPVPRGAVFDAAVDHTVGGGAILDLGDDREAYLPFGAVDDHVTDGDTLRVAIRDPAPPWHDDRPTATSTITVSGALASLDRGVDALVAGAATDRAELARATELLDPDIPDNWGVYWEYDGADASLDARGTALDTLAARADRLEATLADADGGDTPGLVAAPDTTLWAWFGRETRCALDDHRRTVAATMPGHHRIKAGSDAASDAVDFAEALGASVDEFPFGAVTDQFGPSVGASIEIQHGKPDGALISLGRGEVTDRSAENARITVEREMTGGGTYDALGVAREAGDTATTRFTEGNWWYPTVYRSEDGERKGTYLNVCTPVEVFPDAVRYVDLHVDVIKHADGAVEIVDREELQDCVADGLVSEELAEKALSVAERVQSAVAE.

Residues 93–139 (GAVFDAAVDHTVGGGAILDLGDDREAYLPFGAVDDHVTDGDTLRVAI) enclose the S1 motif domain.

This sequence belongs to the FAU-1 family.

In terms of biological role, probable RNase involved in rRNA stability through maturation and/or degradation of precursor rRNAs. Binds to RNA in loop regions with AU-rich sequences. This chain is Probable ribonuclease FAU-1, found in Halobacterium salinarum (strain ATCC 29341 / DSM 671 / R1).